An 82-amino-acid chain; its full sequence is ATP synthase subunit c, chloroplastic (82 aa).

The next 2 membrane-spanning stretches (helical) occupy residues 7-27 and 57-77; these read AASVVASGLSVGLAAIGPGIG and LAFMESLTIYGLVVALALLFA.

This sequence belongs to the ATPase C chain family. F-type ATPases have 2 components, F(1) - the catalytic core - and F(0) - the membrane proton channel. F(1) has five subunits: alpha(3), beta(3), gamma(1), delta(1), epsilon(1). F(0) has four main subunits: a(1), b(1), b'(1) and c(10-14). The alpha and beta chains form an alternating ring which encloses part of the gamma chain. F(1) is attached to F(0) by a central stalk formed by the gamma and epsilon chains, while a peripheral stalk is formed by the delta, b and b' chains.

Its subcellular location is the plastid. The protein resides in the chloroplast thylakoid membrane. Functionally, f(1)F(0) ATP synthase produces ATP from ADP in the presence of a proton or sodium gradient. F-type ATPases consist of two structural domains, F(1) containing the extramembraneous catalytic core and F(0) containing the membrane proton channel, linked together by a central stalk and a peripheral stalk. During catalysis, ATP synthesis in the catalytic domain of F(1) is coupled via a rotary mechanism of the central stalk subunits to proton translocation. In terms of biological role, key component of the F(0) channel; it plays a direct role in translocation across the membrane. A homomeric c-ring of between 10-14 subunits forms the central stalk rotor element with the F(1) delta and epsilon subunits. The protein is ATP synthase subunit c, chloroplastic of Guillardia theta (Cryptophyte).